Here is an 805-residue protein sequence, read N- to C-terminus: H(+)/Cl(-) exchange transporter 7 (805 aa).

The interval 1–49 (MANVSKKVSWSGRDRDDEEAAPLLRRTARPGGGTPLLNGAGPGAARQSP) is disordered. Residues 1–126 (MANVSKKVSW…TAFRTVEIKR (126 aa)) lie on the Cytoplasmic side of the membrane. 2 positions are modified to phosphoserine: Ser9 and Ser60. Transmembrane regions (helical) follow at residues 127-159 (WVIC…YRVI) and 174-197 (FSLL…VAFI). The Selectivity filter part_1 motif lies at 203-207 (GSGIP). Residue Ser204 coordinates chloride. The segment at residues 206–213 (IPQIKCFL) is an intramembrane region (helical). A run of 2 helical transmembrane segments spans residues 223 to 241 (RLKT…VVGG) and 247 to 264 (EGPM…ISQG). The short motif at 245–249 (GKEGP) is the Selectivity filter part_2 element. Intramembrane regions (helical) lie at residues 288 to 300 (FVSA…VSAA) and 304 to 312 (PVGGVLFSL). 5 helical membrane passes run 322–341 (FLTW…LNFV), 375–405 (IPVF…FRIR), 410–432 (PCLQ…FVLI), 487–507 (PLTL…TYGL), and 512–535 (GVFI…LSYL). Positions 512–516 (GVFIP) match the Selectivity filter part_3 motif. Residue Phe514 participates in chloride binding. Residues 545–559 (GKYALMGAAAQLGGI) constitute an intramembrane region (helical). Residues 560–562 (VRM) constitute an intramembrane region (note=Loop between two helices). The segment at residues 563-574 (TLSLTVIMMEAT) is an intramembrane region (helical). Positions 575-578 (SNVT) form an intramembrane region, note=Loop between two helices. A helical membrane pass occupies residues 579 to 597 (YGFPIMLVLMTAKIVGDVF). The Cytoplasmic segment spans residues 598–805 (IEGLYDMHIQ…GLEELSLAQT (208 aa)). Residue Tyr602 participates in chloride binding. CBS domains lie at 631–695 (MSTP…VFVE) and 741–799 (MNPS…GLEE). ATP contacts are provided by residues 658–660 (HNG) and 783–786 (TRKD). Ser801 is modified (phosphoserine).

It belongs to the chloride channel (TC 2.A.49) family. ClC-7/CLCN7 subfamily. As to quaternary structure, chloride channel 7 are heteromers of alpha (CLCN7) and beta (OSTM1) subunits. In terms of tissue distribution, brain and kidney.

It is found in the lysosome membrane. The catalysed reaction is 2 chloride(in) + H(+)(out) = 2 chloride(out) + H(+)(in). In terms of biological role, slowly voltage-gated channel mediating the exchange of chloride ions against protons. Functions as antiporter and contributes to the acidification of the lysosome lumen and may be involved in maintaining lysosomal pH. The CLC channel family contains both chloride channels and proton-coupled anion transporters that exchange chloride or another anion for protons. The presence of conserved gating glutamate residues is typical for family members that function as antiporters. The sequence is that of H(+)/Cl(-) exchange transporter 7 from Homo sapiens (Human).